The following is a 202-amino-acid chain: Adenosylcobalamin/alpha-ribazole phosphatase (202 aa).

The active-site Tele-phosphohistidine intermediate is His8. Glu81 (proton donor/acceptor) is an active-site residue.

This sequence belongs to the phosphoglycerate mutase family.

The catalysed reaction is adenosylcob(III)alamin 5'-phosphate + H2O = adenosylcob(III)alamin + phosphate. It carries out the reaction alpha-ribazole 5'-phosphate + H2O = alpha-ribazole + phosphate. The protein operates within nucleoside biosynthesis; alpha-ribazole biosynthesis; alpha-ribazole from 5,6-dimethylbenzimidazole: step 2/2. Functionally, catalyzes the conversion of adenosylcobalamin 5'-phosphate to adenosylcobalamin (vitamin B12); involved in the assembly of the nucleotide loop of cobalamin. Also catalyzes the hydrolysis of the phospho group from alpha-ribazole 5'-phosphate to form alpha-ribazole. The polypeptide is Adenosylcobalamin/alpha-ribazole phosphatase (cobC) (Salmonella typhi).